A 296-amino-acid polypeptide reads, in one-letter code: Ribosomal protein L11 methyltransferase (296 aa).

Residues Thr145, Gly166, Asp188, and Asn230 each contribute to the S-adenosyl-L-methionine site.

This sequence belongs to the methyltransferase superfamily. PrmA family.

It localises to the cytoplasm. The catalysed reaction is L-lysyl-[protein] + 3 S-adenosyl-L-methionine = N(6),N(6),N(6)-trimethyl-L-lysyl-[protein] + 3 S-adenosyl-L-homocysteine + 3 H(+). Its function is as follows. Methylates ribosomal protein L11. The protein is Ribosomal protein L11 methyltransferase of Histophilus somni (strain 2336) (Haemophilus somnus).